The chain runs to 567 residues: 2-succinyl-5-enolpyruvyl-6-hydroxy-3-cyclohexene-1-carboxylate synthase (567 aa).

Belongs to the TPP enzyme family. MenD subfamily. Homodimer. Requires Mg(2+) as cofactor. It depends on Mn(2+) as a cofactor. The cofactor is thiamine diphosphate.

It carries out the reaction isochorismate + 2-oxoglutarate + H(+) = 5-enolpyruvoyl-6-hydroxy-2-succinyl-cyclohex-3-ene-1-carboxylate + CO2. It functions in the pathway quinol/quinone metabolism; 1,4-dihydroxy-2-naphthoate biosynthesis; 1,4-dihydroxy-2-naphthoate from chorismate: step 2/7. The protein operates within quinol/quinone metabolism; menaquinone biosynthesis. Its function is as follows. Catalyzes the thiamine diphosphate-dependent decarboxylation of 2-oxoglutarate and the subsequent addition of the resulting succinic semialdehyde-thiamine pyrophosphate anion to isochorismate to yield 2-succinyl-5-enolpyruvyl-6-hydroxy-3-cyclohexene-1-carboxylate (SEPHCHC). This Yersinia pseudotuberculosis serotype I (strain IP32953) protein is 2-succinyl-5-enolpyruvyl-6-hydroxy-3-cyclohexene-1-carboxylate synthase.